Consider the following 675-residue polypeptide: Neurexin-3b-beta (675 aa).

Positions 1 to 30 (MRPHFKTRYPQWLSCMLPLVTGCVFGAVWG) are cleaved as a signal peptide. Topologically, residues 31 to 599 (SNLDSTVVLS…EVIRESSSTT (569 aa)) are extracellular. Positions 81–281 (ATYIFGKGGG…HANIKINGSV (201 aa)) constitute a Laminin G-like domain. 2 disordered regions span residues 313 to 337 (TTLS…DIVS) and 490 to 534 (FKPK…MNNR). Over residues 325-335 (SPPTIQTTDDI) the composition is skewed to polar residues. The chain crosses the membrane as a helical span at residues 600 to 620 (GMVVGIVSAAALCILILLYAM). Residues 621-675 (YKYRNRDEGSYQVDETRNYISNSAQNNGTVVKDKQPSTKGASNKRPKDKDKEYYV) lie on the Cytoplasmic side of the membrane. A disordered region spans residues 642 to 675 (NSAQNNGTVVKDKQPSTKGASNKRPKDKDKEYYV). Basic and acidic residues predominate over residues 665–675 (RPKDKDKEYYV).

The protein belongs to the neurexin family. Post-translationally, processed by alpha-secretase leading to the formation of an extracellular soluble protein as well as a C-terminal membrane-embedded fragment (CTF). Proteolysis of these CTFs by gamma-secretase releases intracellular domains (ICDs) and extracellular peptides.

It localises to the membrane. Neuronal cell surface protein that may be involved in cell recognition and cell adhesion. The sequence is that of Neurexin-3b-beta (nrxn3b) from Danio rerio (Zebrafish).